The chain runs to 117 residues: G antigen 12I (117 aa).

The segment at 1–117 (MSWRGRSTYY…PEEGEKQSQC (117 aa)) is disordered. Composition is skewed to acidic residues over residues 32-45 (FSDEVEPATPEEGE) and 87-96 (ECEDGPDGQE). Over residues 103–117 (EEVKTPEEGEKQSQC) the composition is skewed to basic and acidic residues.

Belongs to the GAGE family. In terms of assembly, forms tetramers.

The sequence is that of G antigen 12I (GAGE12I) from Homo sapiens (Human).